Reading from the N-terminus, the 149-residue chain is Large ribosomal subunit protein bL9 (149 aa).

The protein belongs to the bacterial ribosomal protein bL9 family.

Functionally, binds to the 23S rRNA. This chain is Large ribosomal subunit protein bL9, found in Rubrobacter xylanophilus (strain DSM 9941 / JCM 11954 / NBRC 16129 / PRD-1).